Here is a 357-residue protein sequence, read N- to C-terminus: MRPARALIDLQALRHNYRLARELTGAKALAVIKADAYGHGAVRCALALEAEADGFAVACIEEALELRAAGIKAPVLLLEGFFEASELALIAEHDLWCVVHSLWQLEAIEKTPLHKPLNVWLKLDSGMHRVGLHPKDYHDAYQRLLASGKVSRIVLMTHFARADELDADATSQQIAVFEAARQGLAAECSLRNSPGVLGWPQAPSDWVRPGLMLYGATPFEVAQAEAARLQPVMTLQSRVISVRELPAGEPVGYGAKFVSPRPTRVGVVAMGYADGYPRQAPNGTPVLVAGKRTQLIGRVSMDMLSIDLTDVPQATVGSPVEFWGKQVLASEVAAHAGTIPYQIFCNLKRVPRDYIGE.

The active-site Proton acceptor; specific for D-alanine is lysine 33. Lysine 33 is subject to N6-(pyridoxal phosphate)lysine. Arginine 129 is a substrate binding site. Tyrosine 253 serves as the catalytic Proton acceptor; specific for L-alanine. Methionine 301 is a binding site for substrate.

Belongs to the alanine racemase family. Pyridoxal 5'-phosphate serves as cofactor.

It catalyses the reaction L-alanine = D-alanine. It functions in the pathway amino-acid biosynthesis; D-alanine biosynthesis; D-alanine from L-alanine: step 1/1. Functionally, isomerizes L-alanine to D-alanine which is then likely oxidized to pyruvate by DadA. Shows racemase activity with both alanine stereoisomers, negligible activity with D-cysteine and L-serine, and exhibits no activity with the remaining natural chiral amino acids. This chain is Alanine racemase, catabolic, found in Pseudomonas putida (strain ATCC 47054 / DSM 6125 / CFBP 8728 / NCIMB 11950 / KT2440).